The following is a 98-amino-acid chain: NADH-ubiquinone oxidoreductase chain 4L (98 aa).

The next 3 membrane-spanning stretches (helical) occupy residues 2-22 (TPIFTNIILAFATAFLGTLIF), 29-49 (SLLCLEGMMLSLFILSTLIIL), and 61-81 (ILLLVFAACEAAIGLALLVMV).

Belongs to the complex I subunit 4L family. Core subunit of respiratory chain NADH dehydrogenase (Complex I) which is composed of 45 different subunits.

It is found in the mitochondrion inner membrane. It carries out the reaction a ubiquinone + NADH + 5 H(+)(in) = a ubiquinol + NAD(+) + 4 H(+)(out). Core subunit of the mitochondrial membrane respiratory chain NADH dehydrogenase (Complex I) which catalyzes electron transfer from NADH through the respiratory chain, using ubiquinone as an electron acceptor. Part of the enzyme membrane arm which is embedded in the lipid bilayer and involved in proton translocation. The polypeptide is NADH-ubiquinone oxidoreductase chain 4L (MT-ND4L) (Avahi cleesei (Cleese's woolly lemur)).